A 108-amino-acid polypeptide reads, in one-letter code: Histone H4 (108 aa).

A disordered region spans residues 1–24; sequence MTGRGKGGKVLSLGGKGGKGAKRH. The DNA-binding element occupies 17–21; it reads GGKGA.

It belongs to the histone H4 family. The nucleosome is a histone octamer containing two molecules each of H2A, H2B, H3 and H4 assembled in one H3-H4 heterotetramer and two H2A-H2B heterodimers. The octamer wraps approximately 147 bp of DNA.

The protein localises to the nucleus. It is found in the chromosome. Core component of nucleosome. Nucleosomes wrap and compact DNA into chromatin, limiting DNA accessibility to the cellular machineries which require DNA as a template. Histones thereby play a central role in transcription regulation, DNA repair, DNA replication and chromosomal stability. DNA accessibility is regulated via a complex set of post-translational modifications of histones, also called histone code, and nucleosome remodeling. The polypeptide is Histone H4 (Mastigamoeba balamuthi (Phreatamoeba balamuthi)).